The primary structure comprises 66 residues: Potassium channel toxin alpha-KTx (66 aa).

Positions 1-21 are cleaved as a signal peptide; the sequence is MNTKVVLIMLMITSVILVVEA. Disulfide bonds link cysteine 29–cysteine 49, cysteine 35–cysteine 59, cysteine 39–cysteine 61, and cysteine 44–cysteine 64.

This sequence belongs to the short scorpion toxin superfamily. Potassium channel inhibitor family. As to expression, expressed by the venom gland.

The protein resides in the secreted. Its function is as follows. Blocks voltage-gated potassium channels. The sequence is that of Potassium channel toxin alpha-KTx from Hoffmannihadrurus gertschi (Scorpion).